The primary structure comprises 309 residues: NAD kinase (309 aa).

The Proton acceptor role is filled by Asp-89. Residues 89 to 90 (DG), 163 to 164 (NE), His-174, Arg-191, Asp-193, and 204 to 209 (TAYSLS) contribute to the NAD(+) site.

The protein belongs to the NAD kinase family. A divalent metal cation serves as cofactor.

The protein resides in the cytoplasm. The enzyme catalyses NAD(+) + ATP = ADP + NADP(+) + H(+). Its function is as follows. Involved in the regulation of the intracellular balance of NAD and NADP, and is a key enzyme in the biosynthesis of NADP. Catalyzes specifically the phosphorylation on 2'-hydroxyl of the adenosine moiety of NAD to yield NADP. In Shewanella denitrificans (strain OS217 / ATCC BAA-1090 / DSM 15013), this protein is NAD kinase.